The sequence spans 147 residues: Cytochrome c' (147 aa).

The first 21 residues, 1-21, serve as a signal peptide directing secretion; the sequence is MKRMMIVAALAALTTTTVAQA. Positions 31, 87, 88, 137, 140, and 141 each coordinate heme c.

Homodimer. Post-translationally, binds 1 heme c group covalently per subunit.

In terms of biological role, cytochrome c' is the most widely occurring bacterial c-type cytochrome. Cytochromes c' are high-spin proteins and the heme has no sixth ligand. Their exact function is not known. This Rhodospirillum rubrum (strain ATCC 11170 / ATH 1.1.1 / DSM 467 / LMG 4362 / NCIMB 8255 / S1) protein is Cytochrome c'.